The primary structure comprises 498 residues: Glycerol kinase (498 aa).

Thr-11 is an ADP binding site. Positions 11, 12, and 13 each coordinate ATP. A sn-glycerol 3-phosphate-binding site is contributed by Thr-11. Position 15 (Arg-15) interacts with ADP. The sn-glycerol 3-phosphate site is built by Arg-81, Glu-82, Tyr-133, and Asp-242. Residues Arg-81, Glu-82, Tyr-133, Asp-242, and Gln-243 each coordinate glycerol. Thr-264 and Gly-307 together coordinate ADP. Residues Thr-264, Gly-307, Gln-311, and Gly-412 each contribute to the ATP site. Residues Gly-412 and Asn-416 each coordinate ADP.

It belongs to the FGGY kinase family.

It catalyses the reaction glycerol + ATP = sn-glycerol 3-phosphate + ADP + H(+). It functions in the pathway polyol metabolism; glycerol degradation via glycerol kinase pathway; sn-glycerol 3-phosphate from glycerol: step 1/1. With respect to regulation, inhibited by fructose 1,6-bisphosphate (FBP). Key enzyme in the regulation of glycerol uptake and metabolism. Catalyzes the phosphorylation of glycerol to yield sn-glycerol 3-phosphate. The chain is Glycerol kinase from Acidovorax ebreus (strain TPSY) (Diaphorobacter sp. (strain TPSY)).